Reading from the N-terminus, the 447-residue chain is Probable tRNA methyltransferase 9B (447 aa).

At serine 212 the chain carries Phosphoserine. Disordered stretches follow at residues 274–306 and 320–348; these read AWAN…PNLD and WLRT…NFLD. Polar residues predominate over residues 276 to 286; sequence ANSTVSQQPSR.

Belongs to the methyltransferase superfamily.

May modify wobble uridines in specific arginine and glutamic acid tRNAs. Acts as a tumor suppressor by promoting the expression of LIN9. The chain is Probable tRNA methyltransferase 9B (Trmt9b) from Mus musculus (Mouse).